Consider the following 183-residue polypeptide: MKKKTSLSEEDQALFRQLMTGTRKIKQDTIVHRPQRKKVTEVAPKRLLQEQADNSHYFSDEFQPLLNTEGSTKYVRADVSHFELKKLRRGDYSPELFLDLHGLTQQQAKQELGALIAACRREHVFCACVMHGHGKHILKQQTPLWLAQHPHIMAFHQAPKEYGGDAALLVLIEVEEWQPPELP.

Positions 98–173 constitute a Smr domain; it reads LDLHGLTQQQ…GDAALLVLIE (76 aa).

This sequence belongs to the SmrB family. In terms of assembly, associates with collided ribosomes, but not with correctly translating polysomes.

In terms of biological role, acts as a ribosome collision sensor. Detects stalled/collided disomes (pairs of ribosomes where the leading ribosome is stalled and a second ribosome has collided with it) and endonucleolytically cleaves mRNA at the 5' boundary of the stalled ribosome. Stalled/collided disomes form a new interface (primarily via the 30S subunits) that binds SmrB. Cleaved mRNA becomes available for tmRNA ligation, leading to ribosomal subunit dissociation and rescue of stalled ribosomes. This Klebsiella pneumoniae (strain 342) protein is Ribosome rescue factor SmrB.